The sequence spans 332 residues: Beta-ketoacyl-[acyl-carrier-protein] synthase III (332 aa).

Catalysis depends on residues C112 and H252. The ACP-binding stretch occupies residues 253-257 (QANLR). The active site involves N282.

This sequence belongs to the thiolase-like superfamily. FabH family. In terms of assembly, homodimer.

Its subcellular location is the cytoplasm. It carries out the reaction malonyl-[ACP] + acetyl-CoA + H(+) = 3-oxobutanoyl-[ACP] + CO2 + CoA. It participates in lipid metabolism; fatty acid biosynthesis. In terms of biological role, catalyzes the condensation reaction of fatty acid synthesis by the addition to an acyl acceptor of two carbons from malonyl-ACP. Catalyzes the first condensation reaction which initiates fatty acid synthesis and may therefore play a role in governing the total rate of fatty acid production. Possesses both acetoacetyl-ACP synthase and acetyl transacylase activities. Its substrate specificity determines the biosynthesis of branched-chain and/or straight-chain of fatty acids. The polypeptide is Beta-ketoacyl-[acyl-carrier-protein] synthase III (Syntrophomonas wolfei subsp. wolfei (strain DSM 2245B / Goettingen)).